The chain runs to 148 residues: DNA-directed RNA polymerase II subunit GRINL1A, isoforms 4/5 (148 aa).

The disordered stretch occupies residues 1–66 (MATPARAPES…AEFGGAAGNV (66 aa)). The segment covering 53-66 (GLGAAEFGGAAGNV) has biased composition (low complexity).

In Homo sapiens (Human), this protein is DNA-directed RNA polymerase II subunit GRINL1A, isoforms 4/5 (POLR2M).